Consider the following 387-residue polypeptide: Protein ERD1 homolog 2 (387 aa).

8 helical membrane-spanning segments follow: residues 20–40 (IGLL…LIYI), 92–112 (AGYC…ILFL), 126–146 (PIYP…PFPW), 177–197 (FIVS…YIFG), 217–237 (GTFF…LQCL), 252–272 (LLSA…AIIH), 285–305 (GYLF…TFLW), and 326–346 (FPMF…VTWS). The region spanning 212–387 (DLKCDGTFFV…LFFHLDAISS (176 aa)) is the EXS domain.

Belongs to the ERD1 family.

It is found in the membrane. The sequence is that of Protein ERD1 homolog 2 from Schizosaccharomyces pombe (strain 972 / ATCC 24843) (Fission yeast).